Consider the following 433-residue polypeptide: Serine hydroxymethyltransferase (433 aa).

Residues Leu132 and 136-138 (GHL) contribute to the (6S)-5,6,7,8-tetrahydrofolate site. Lys241 carries the N6-(pyridoxal phosphate)lysine modification.

It belongs to the SHMT family. In terms of assembly, homodimer. It depends on pyridoxal 5'-phosphate as a cofactor.

It is found in the cytoplasm. It catalyses the reaction (6R)-5,10-methylene-5,6,7,8-tetrahydrofolate + glycine + H2O = (6S)-5,6,7,8-tetrahydrofolate + L-serine. The protein operates within one-carbon metabolism; tetrahydrofolate interconversion. It functions in the pathway amino-acid biosynthesis; glycine biosynthesis; glycine from L-serine: step 1/1. Functionally, catalyzes the reversible interconversion of serine and glycine with tetrahydrofolate (THF) serving as the one-carbon carrier. This reaction serves as the major source of one-carbon groups required for the biosynthesis of purines, thymidylate, methionine, and other important biomolecules. Also exhibits THF-independent aldolase activity toward beta-hydroxyamino acids, producing glycine and aldehydes, via a retro-aldol mechanism. In Afipia carboxidovorans (strain ATCC 49405 / DSM 1227 / KCTC 32145 / OM5) (Oligotropha carboxidovorans), this protein is Serine hydroxymethyltransferase.